The primary structure comprises 145 residues: Putative type I specificity subunit S.MpnORF289P C-terminus (145 aa).

The protein belongs to the type-I restriction system S methylase family. As to quaternary structure, the methyltransferase is composed of M and S polypeptides.

The C-terminal section of a specificity (S) subunit of a type I methyltransferase (MTase); this subunit dictates DNA sequence specificity. The single R subunit has multiple frameshifts and is probably not expressed. The chain is Putative type I specificity subunit S.MpnORF289P C-terminus from Mycoplasma pneumoniae (strain ATCC 29342 / M129 / Subtype 1) (Mycoplasmoides pneumoniae).